A 192-amino-acid polypeptide reads, in one-letter code: Thymidine kinase (192 aa).

ATP contacts are provided by residues 9-16 (GAMNSGKT) and 85-88 (DEAQ). Glu-86 acts as the Proton acceptor in catalysis. Zn(2+)-binding residues include Cys-143, Cys-146, Cys-180, and His-183.

Belongs to the thymidine kinase family. In terms of assembly, homotetramer.

Its subcellular location is the cytoplasm. It carries out the reaction thymidine + ATP = dTMP + ADP + H(+). This chain is Thymidine kinase, found in Lactiplantibacillus plantarum (strain ATCC BAA-793 / NCIMB 8826 / WCFS1) (Lactobacillus plantarum).